The sequence spans 580 residues: Peptide transporter PTR_B (580 aa).

Residues Met1–Asp30 show a composition bias toward basic and acidic residues. The interval Met1 to His45 is disordered. A helical transmembrane segment spans residues Ile57–Leu78. The N-linked (GlcNAc...) asparagine glycan is linked to Asn101. Transmembrane regions (helical) follow at residues Ala107 to Ala127, Tyr134 to Thr154, Thr163 to Ile183, Val219 to Ala239, Phe249 to Leu269, Ala326 to Met346, Ile370 to Ile390, Ile402 to Phe422, Ile449 to Thr469, Ser484 to Leu504, and Met513 to Phe533.

Belongs to the major facilitator superfamily. Proton-dependent oligopeptide transporter (POT/PTR) (TC 2.A.17) family.

It localises to the cell membrane. The catalysed reaction is a dipeptide(out) + H(+)(out) = a dipeptide(in) + H(+)(in). It catalyses the reaction an L-amino acid tripeptide(out) + H(+)(out) = an L-amino acid tripeptide(in) + H(+)(in). Peptide transporter that exploits the inwardly directed proton motive force to facilitate the cellular uptake of di/tripeptides. Shows strong uptake specificity towards the dipeptides Tyr-Phe and Gly-His, when compared to PTR_A and PTR_C. This chain is Peptide transporter PTR_B, found in Candidozyma auris (Yeast).